The following is a 121-amino-acid chain: Small ribosomal subunit protein uS13 (121 aa).

The interval 91 to 121 (HRRGLPVRGQNTKNNARTRKGKKASMAGKKK) is disordered. Basic residues predominate over residues 106–121 (ARTRKGKKASMAGKKK).

Belongs to the universal ribosomal protein uS13 family. In terms of assembly, part of the 30S ribosomal subunit. Forms a loose heterodimer with protein S19. Forms two bridges to the 50S subunit in the 70S ribosome.

In terms of biological role, located at the top of the head of the 30S subunit, it contacts several helices of the 16S rRNA. In the 70S ribosome it contacts the 23S rRNA (bridge B1a) and protein L5 of the 50S subunit (bridge B1b), connecting the 2 subunits; these bridges are implicated in subunit movement. Contacts the tRNAs in the A and P-sites. In Lacticaseibacillus paracasei (strain ATCC 334 / BCRC 17002 / CCUG 31169 / CIP 107868 / KCTC 3260 / NRRL B-441) (Lactobacillus paracasei), this protein is Small ribosomal subunit protein uS13.